The primary structure comprises 64 residues: Prokaryotic ubiquitin-like protein Pup (64 aa).

The segment at 1–32 is disordered; the sequence is MNAKQTQIMGGGGRDEDNAEDSAQASGQVQIN. The interval 20–58 is ARC ATPase binding; that stretch reads EDSAQASGQVQINTEGVDSLLDEIDGLLENNAEEFVRSY. Positions 21–32 are enriched in polar residues; the sequence is DSAQASGQVQIN. Glu-64 participates in a covalent cross-link: Isoglutamyl lysine isopeptide (Glu-Lys) (interchain with K-? in acceptor proteins).

This sequence belongs to the prokaryotic ubiquitin-like protein family. In terms of assembly, strongly interacts with the proteasome-associated ATPase ARC through a hydrophobic interface; the interacting region of Pup lies in its C-terminal half. There is one Pup binding site per ARC hexamer ring.

It participates in protein degradation; proteasomal Pup-dependent pathway. Protein modifier that is covalently attached to lysine residues of substrate proteins, thereby targeting them for proteasomal degradation. The tagging system is termed pupylation. The polypeptide is Prokaryotic ubiquitin-like protein Pup (Corynebacterium glutamicum (strain R)).